The chain runs to 1113 residues: Poly(A) RNA polymerase gld-2 (1113 aa).

4 disordered regions span residues 1 to 113, 134 to 175, 205 to 266, and 445 to 513; these read MVMA…PKYH, RPIF…PTQP, LYRS…GQDP, and LDDE…DEST. Positions 22–52 are enriched in low complexity; the sequence is SPSVDSVSRVQQQSGGFAFYNQQSNHQYQQS. Polar residues predominate over residues 60–106; the sequence is SRDGNTGYYNNHSGNKRQTYNNQRGGRSYNHRGNSNYQQNGEYSGNQ. A compositionally biased stretch (low complexity) spans 149–172; that stretch reads RRSSPPSPSALSSSTANSTSNRAP. The span at 223–233 shows a compositional bias: pro residues; the sequence is YKQPPPQPPST. Residues 451–485 show a composition bias toward basic and acidic residues; the sequence is GADHDKTIDENRRRIHKSQEPRIGTEEKALNELPR. A compositionally biased stretch (low complexity) spans 492-507; that stretch reads SSCSSISSVSESSSPS. Positions 606 and 608 each coordinate Mg(2+). In terms of domain architecture, PAP-associated spans 780 to 816; that stretch reads TLGELLIGFLDYYANEFNYDRDAISIRQGRRVERAAL. 2 disordered regions span residues 817–854 and 966–1113; these read AVRP…GIPM and GPGH…NVSQ. Over residues 972 to 994 the composition is skewed to polar residues; that stretch reads YQQQSNQNLSRPQRPGSNQGYQM. 2 stretches are compositionally biased toward low complexity: residues 995–1035 and 1044–1061; these read NNNR…SRSN and QQNS…KENV. Residues 1069–1084 show a composition bias toward basic and acidic residues; sequence VDKKQQNSNRKDDGNR.

Belongs to the DNA polymerase type-B-like family. GLD2 subfamily. As to quaternary structure, interacts with gld-3. The cofactor is Mg(2+). Requires Mn(2+) as cofactor. Germline-specific.

The protein localises to the cytoplasm. It carries out the reaction RNA(n) + ATP = RNA(n)-3'-adenine ribonucleotide + diphosphate. Its function is as follows. Cytoplasmic poly(A) RNA polymerase that adds successive AMP monomers to the 3'-end of specific RNAs, forming a poly(A) tail. Acts as a regulator of mitosis/meiosis required for progression through meiotic prophase during oogenesis and spermatogenesis and for promotion of the entry into meiosis from the mitotic cell cycle. May act by regulating and activating gld-1 mRNA activity in germline. Required for polyadenylation of neg-1 mRNA during embryogenesis. The chain is Poly(A) RNA polymerase gld-2 (gld-2) from Caenorhabditis elegans.